The primary structure comprises 325 residues: MLERVLLLTLILSFVITVILSPIFIPFLRRLKFGQSIREEGPKSHQKKSGTPTMGGLMILLSILVSSLFVSFQLSIFSMDVLLLLLVTIGFGVLGFIDDFIKVVMKRNLGLTSKQKLIGQLVVAVLFYLGLRNMGLSTEVTIPATSLSIDFGWFYLPLVIVMLVGASNAVNLTDGLDGLVAGTGAIAFGAFAIIAWATNYFEVAIFSAAVVGAVLGFLVFNSHPAKVFMGDTGSLALGGAIAAIAIMAKQEILLIIIGGVFVIETLSVIIQVISFKTRGKRIFKMSPLHHHYELSGWSEWRVVVTFWTVGLLFAMLAIYLEVWIT.

The next 10 membrane-spanning stretches (helical) occupy residues Val5–Ile25, Leu57–Phe77, Val81–Ile101, Leu117–Ser137, Ser146–Ala166, Gly178–Thr198, Tyr200–Phe220, Val227–Met247, Ile252–Val272, and Val304–Ile324.

It belongs to the glycosyltransferase 4 family. MraY subfamily. It depends on Mg(2+) as a cofactor.

It localises to the cell membrane. The enzyme catalyses UDP-N-acetyl-alpha-D-muramoyl-L-alanyl-gamma-D-glutamyl-meso-2,6-diaminopimeloyl-D-alanyl-D-alanine + di-trans,octa-cis-undecaprenyl phosphate = di-trans,octa-cis-undecaprenyl diphospho-N-acetyl-alpha-D-muramoyl-L-alanyl-D-glutamyl-meso-2,6-diaminopimeloyl-D-alanyl-D-alanine + UMP. Its pathway is cell wall biogenesis; peptidoglycan biosynthesis. Catalyzes the initial step of the lipid cycle reactions in the biosynthesis of the cell wall peptidoglycan: transfers peptidoglycan precursor phospho-MurNAc-pentapeptide from UDP-MurNAc-pentapeptide onto the lipid carrier undecaprenyl phosphate, yielding undecaprenyl-pyrophosphoryl-MurNAc-pentapeptide, known as lipid I. This chain is Phospho-N-acetylmuramoyl-pentapeptide-transferase, found in Halalkalibacterium halodurans (strain ATCC BAA-125 / DSM 18197 / FERM 7344 / JCM 9153 / C-125) (Bacillus halodurans).